We begin with the raw amino-acid sequence, 399 residues long: Beta-1,4-galactosyltransferase 1 (399 aa).

The Cytoplasmic segment spans residues methionine 1–arginine 24. A helical; Signal-anchor for type II membrane protein membrane pass occupies residues leucine 25–glycine 44. At arginine 45 to arginine 399 the chain is on the lumenal side. The tract at residues glutamine 61–asparagine 113 is disordered. Positions alanine 82–arginine 95 are enriched in pro residues. Asparagine 113 carries an N-linked (GlcNAc...) asparagine glycan. Cysteine 131 and cysteine 173 are oxidised to a cystine. UDP-alpha-D-galactose is bound by residues proline 184–arginine 188, phenylalanine 223–arginine 225, valine 250–aspartate 251, and tryptophan 311. The cysteines at positions 244 and 263 are disulfide-linked. Aspartate 251 contributes to the Mn(2+) binding site. Residue glycine 313–aspartate 316 coordinates N-acetyl-D-glucosamine. Histidine 344 contributes to the Mn(2+) binding site. Histidine 344–arginine 346 contributes to the UDP-alpha-D-galactose binding site. Arginine 356 serves as a coordination point for N-acetyl-D-glucosamine.

Belongs to the glycosyltransferase 7 family. In terms of assembly, homodimer; and heterodimer with alpha-lactalbumin to form lactose synthase. Interacts (via N-terminal cytoplasmic domain) with UBE2Q1 (via N-terminus); the interaction is direct. Mn(2+) is required as a cofactor. The soluble form derives from the membrane forms by proteolytic processing.

The protein localises to the golgi apparatus. The protein resides in the golgi stack membrane. It is found in the cell membrane. It localises to the cell surface. Its subcellular location is the cell projection. The protein localises to the filopodium. The protein resides in the secreted. It carries out the reaction D-glucose + UDP-alpha-D-galactose = lactose + UDP + H(+). It catalyses the reaction an N-acetyl-beta-D-glucosaminyl derivative + UDP-alpha-D-galactose = a beta-D-galactosyl-(1-&gt;4)-N-acetyl-beta-D-glucosaminyl derivative + UDP + H(+). The catalysed reaction is N-acetyl-D-glucosamine + UDP-alpha-D-galactose = beta-D-galactosyl-(1-&gt;4)-N-acetyl-D-glucosamine + UDP + H(+). The enzyme catalyses a beta-D-GlcNAc-(1-&gt;3)-beta-D-Gal-(1-&gt;4)-beta-D-Glc-(1&lt;-&gt;1)-Cer(d18:1(4E)) + UDP-alpha-D-galactose = a neolactoside nLc4Cer(d18:1(4E)) + UDP + H(+). It carries out the reaction a beta-D-glucosylceramide + UDP-alpha-D-galactose = a beta-D-galactosyl-(1-&gt;4)-beta-D-glucosyl-(1&lt;-&gt;1)-ceramide + UDP + H(+). It catalyses the reaction a neolactoside IV(3)-beta-GlcNAc-nLc4Cer + UDP-alpha-D-galactose = a neolactoside nLc6Cer + UDP + H(+). It functions in the pathway protein modification; protein glycosylation. Functionally, the Golgi complex form catalyzes the production of lactose in the lactating mammary gland and could also be responsible for the synthesis of complex-type N-linked oligosaccharides in many glycoproteins as well as the carbohydrate moieties of glycolipids. Its function is as follows. The cell surface form functions as a recognition molecule during a variety of cell to cell and cell to matrix interactions, as those occurring during development and egg fertilization, by binding to specific oligosaccharide ligands on opposing cells or in the extracellular matrix. The secreted form is responsible for the synthesis of complex-type to N-linked oligosaccharides in many glycoproteins as well as the carbohydrate moieties of glycolipids. The sequence is that of Beta-1,4-galactosyltransferase 1 from Mus musculus (Mouse).